The chain runs to 156 residues: Small ribosomal subunit protein bS16 (156 aa).

The disordered stretch occupies residues 114-156 (ENEPVAEAITPKKKKAAKADEAKAEDTAADAEAPAADAEAADK). Residues 130–139 (AKADEAKAED) are compositionally biased toward basic and acidic residues. The segment covering 143–156 (DAEAPAADAEAADK) has biased composition (low complexity).

This sequence belongs to the bacterial ribosomal protein bS16 family.

This Rhodococcus erythropolis (strain PR4 / NBRC 100887) protein is Small ribosomal subunit protein bS16.